A 76-amino-acid polypeptide reads, in one-letter code: Small proline-rich protein 4 (76 aa).

Positions 38-76 (PKTKDPCVPQAKKQCPARSTTNPAQEKCPAQQDPKCKQK) are disordered.

Belongs to the cornifin (SPRR) family. Post-translationally, cross-linked to membrane proteins by transglutaminase.

The protein resides in the cytoplasm. It is found in the cell cortex. In terms of biological role, cross-linked envelope protein of keratinocytes. Involved in UV-induced cornification. The polypeptide is Small proline-rich protein 4 (Sprr4) (Mus musculus (Mouse)).